Reading from the N-terminus, the 180-residue chain is Chromosome-anchoring protein RacA (180 aa).

Positions 5-25 (TPFIAKKLGVSPKAVVRIAQQ) form a DNA-binding region, H-T-H motif. Positions 67 to 151 (KASSNEVEEL…LEAALTKEEP (85 aa)) form a coiled coil.

It belongs to the RacA family.

It localises to the cytoplasm. Required for the formation of axial filaments and for anchoring the origin regions at the cell poles in sporulating cells, thus ensuring proper chromosome segregation in the prespore. Binds in a dispersed manner throughout the chromosome but preferentially to sites clustered in the origin portion of the chromosome, causing condensation of the chromosome and its remodeling into an elongated, anchored structure. The protein is Chromosome-anchoring protein RacA of Bacillus cereus (strain B4264).